Consider the following 62-residue polypeptide: Guanine nucleotide-binding protein subunit gamma (62 aa).

Cys-59 is modified (cysteine methyl ester). Cys-59 carries S-geranylgeranyl cysteine lipidation. Positions 60–62 are cleaved as a propeptide — removed in mature form; it reads SVL.

Belongs to the G protein gamma family. G proteins are composed of 3 units, alpha, beta and gamma. Interacts with gpb-1 and gpb-2.

The protein localises to the cell membrane. In terms of biological role, guanine nucleotide-binding proteins (G proteins) are involved as a modulator or transducer in various transmembrane signaling systems. The beta and gamma chains are required for the GTPase activity, for replacement of GDP by GTP, and for G protein-effector interaction. The sequence is that of Guanine nucleotide-binding protein subunit gamma (gpc-1) from Caenorhabditis briggsae.